Here is a 368-residue protein sequence, read N- to C-terminus: 2-oxoglutarate-dependent dioxygenase frbJ (368 aa).

The 107-residue stretch at 171 to 277 folds into the Fe2OG dioxygenase domain; that stretch reads QQHKLKIVKY…RYSIPFFQGV (107 aa). The Fe cation site is built by His198, Asp200, and His256. A 2-oxoglutarate-binding site is contributed by Arg268.

It belongs to the iron/ascorbate-dependent oxidoreductase family.

Its pathway is antifungal biosynthesis. Its function is as follows. 2-oxoglutarate-dependent dioxygenase; part of the gene cluster that mediates the biosynthesis of the antifungal antibiotic FR901469, an inhibitor of beta-1,3-glucansynthase, exerting antifungal activity against the pathogenes Candida albicans and Aspergillus fumigatus. FR901469 is a cyclic depsipeptide containing 12 amino acid residues and a fatty acid chain. The NRPS frbI contains 12 modules responsible for the formation of the depsipeptide backbone which is denoted as Acyl-Thr-Ala-Tyr-Val-4OHPro-Thr-Thr-3OHPro-threo3OHGln-Gly-Thr-Orn-OH (C71H116N14O23). The PKS frbB is probably involved in the production of the hydrocarbon chain, and the acyl-CoA ligase frbC might be involved in the transport of the chain to the peptide ptoduct of frbI. Because FR901469 contains 3 hydroxylated amino acid residues, the 3 oxygenases frbA, frbH, and frbJ might be participating in amino acid hydroxylation. As no thioesterase domains were detected in frbI or frbB, the thioesterases frbD and frbE may instead release and cyclize the products of the NRPS and PKS, respectively. The sequence is that of 2-oxoglutarate-dependent dioxygenase frbJ from Dothideomycetidae sp. (strain 11243) (Fungal sp. (strain No.11243)).